Reading from the N-terminus, the 346-residue chain is Phosphoribosylformylglycinamidine cyclo-ligase (346 aa).

The protein belongs to the AIR synthase family.

It is found in the cytoplasm. It catalyses the reaction 2-formamido-N(1)-(5-O-phospho-beta-D-ribosyl)acetamidine + ATP = 5-amino-1-(5-phospho-beta-D-ribosyl)imidazole + ADP + phosphate + H(+). It functions in the pathway purine metabolism; IMP biosynthesis via de novo pathway; 5-amino-1-(5-phospho-D-ribosyl)imidazole from N(2)-formyl-N(1)-(5-phospho-D-ribosyl)glycinamide: step 2/2. The polypeptide is Phosphoribosylformylglycinamidine cyclo-ligase (Prochlorococcus marinus (strain NATL1A)).